The sequence spans 908 residues: NADH-quinone oxidoreductase subunit G (908 aa).

The region spanning 2-83 (ATIHVDGKEY…GTFISIDDEE (82 aa)) is the 2Fe-2S ferredoxin-type domain. [2Fe-2S] cluster contacts are provided by Cys-34, Cys-45, Cys-48, and Cys-67. Residues 83–122 (EAKQFRESVVEWLMTNHPHDCPVCEEGGNCHLQDMTVMTG) form the 4Fe-4S His(Cys)3-ligated-type domain. Residues His-99, Cys-103, Cys-106, Cys-112, Cys-151, Cys-154, Cys-157, Cys-201, Cys-228, Cys-231, Cys-235, and Cys-263 each contribute to the [4Fe-4S] cluster site. One can recognise a 4Fe-4S Mo/W bis-MGD-type domain in the interval 221–277 (MQFAPSICQQCSIGCNISPGERYGELRRIENRYNGTVNHYFLCDRGRFGYGYVNLKD).

This sequence belongs to the complex I 75 kDa subunit family. As to quaternary structure, composed of 13 different subunits. Subunits NuoCD, E, F, and G constitute the peripheral sector of the complex. It depends on [2Fe-2S] cluster as a cofactor. Requires [4Fe-4S] cluster as cofactor.

The catalysed reaction is a quinone + NADH + 5 H(+)(in) = a quinol + NAD(+) + 4 H(+)(out). Its function is as follows. NDH-1 shuttles electrons from NADH, via FMN and iron-sulfur (Fe-S) centers, to quinones in the respiratory chain. The immediate electron acceptor for the enzyme in this species is believed to be ubiquinone. Couples the redox reaction to proton translocation (for every two electrons transferred, four hydrogen ions are translocated across the cytoplasmic membrane), and thus conserves the redox energy in a proton gradient. The sequence is that of NADH-quinone oxidoreductase subunit G (nuoG) from Shigella flexneri.